The sequence spans 298 residues: Ribosomal RNA small subunit methyltransferase A (298 aa).

Residues Asn30, Val32, Gly57, Glu78, Asp108, and Asn126 each contribute to the S-adenosyl-L-methionine site.

The protein belongs to the class I-like SAM-binding methyltransferase superfamily. rRNA adenine N(6)-methyltransferase family. RsmA subfamily.

The protein resides in the cytoplasm. The catalysed reaction is adenosine(1518)/adenosine(1519) in 16S rRNA + 4 S-adenosyl-L-methionine = N(6)-dimethyladenosine(1518)/N(6)-dimethyladenosine(1519) in 16S rRNA + 4 S-adenosyl-L-homocysteine + 4 H(+). Its function is as follows. Specifically dimethylates two adjacent adenosines (A1518 and A1519) in the loop of a conserved hairpin near the 3'-end of 16S rRNA in the 30S particle. May play a critical role in biogenesis of 30S subunits. The protein is Ribosomal RNA small subunit methyltransferase A of Cutibacterium acnes (strain DSM 16379 / KPA171202) (Propionibacterium acnes).